The sequence spans 378 residues: Succinyl-diaminopimelate desuccinylase (378 aa).

Position 67 (histidine 67) interacts with Zn(2+). Aspartate 69 is an active-site residue. Zn(2+) is bound at residue aspartate 100. Catalysis depends on glutamate 134, which acts as the Proton acceptor. Glutamate 135, glutamate 163, and histidine 349 together coordinate Zn(2+).

Belongs to the peptidase M20A family. DapE subfamily. As to quaternary structure, homodimer. Zn(2+) is required as a cofactor. Requires Co(2+) as cofactor.

The enzyme catalyses N-succinyl-(2S,6S)-2,6-diaminopimelate + H2O = (2S,6S)-2,6-diaminopimelate + succinate. Its pathway is amino-acid biosynthesis; L-lysine biosynthesis via DAP pathway; LL-2,6-diaminopimelate from (S)-tetrahydrodipicolinate (succinylase route): step 3/3. In terms of biological role, catalyzes the hydrolysis of N-succinyl-L,L-diaminopimelic acid (SDAP), forming succinate and LL-2,6-diaminopimelate (DAP), an intermediate involved in the bacterial biosynthesis of lysine and meso-diaminopimelic acid, an essential component of bacterial cell walls. The polypeptide is Succinyl-diaminopimelate desuccinylase (Nitrosospira multiformis (strain ATCC 25196 / NCIMB 11849 / C 71)).